Here is a 584-residue protein sequence, read N- to C-terminus: MVICCAAANCSNRQGKGEKRAVSFHRFPLKDSKRLMQWLKAVQRDNWTPTKYSFLCSEHFTKDSFSKRLEDQHRLLKPTAVPSIFHLAEKKRRAGGHGRPRRRDTGKASAGLRAQASDPVDGKAAAGSPSSSSASPMAKPEPRKLKRATPQGRTAARAARETAGQERGRQPLEGRAEDGPASAATSCSQGEAGTGAEDAGEEGATPADRGLVDRSGVSADDFTPPGSGACKFIGSLHSYSFSSKHARERPAVPREPVERKRLRRDAEPGCSGSSPGPEKGPAQSPPRACPSASSSLTATPQKPAQGASAPPTDVTPKPAAEAVQSEHSDASPMSINEVILSASGACKLIDSLHSYCFSSRQSKSQVCCLREQVEKKNGELRTLRQRVSRSDSQVRELRQKLDQLRRLSLPHLSSLLPPGREPPKMSPVVEPLSWMLGTWLSEPPGAGTFPTLQPFRYLEEAHISHVGQPMLNFSFNAFHPDTHKPMHRECGFIRLEPDTNKVAFVSAQNTGIVEVEEGEVNGQELCIASHSIARISFAKEPHVEQITRKFRLNSEGNLEQTVSMATTTQPLTQHLHVTYKKVTP.

Residues 1–85 (MVICCAAANC…LKPTAVPSIF (85 aa)) form a THAP-type zinc finger. Residues 84–330 (IFHLAEKKRR…EAVQSEHSDA (247 aa)) form a disordered region. Positions 89-104 (EKKRRAGGHGRPRRRD) are enriched in basic residues. A compositionally biased stretch (low complexity) spans 122–138 (GKAAAGSPSSSSASPMA). Residues 158 to 178 (AARETAGQERGRQPLEGRAED) are compositionally biased toward basic and acidic residues. The segment covering 190-208 (GEAGTGAEDAGEEGATPAD) has biased composition (low complexity). Residues 236–239 (LHSY) carry the HCFC1-binding motif (HBM) motif. A Phosphoserine modification is found at Ser-240. Residues 248 to 267 (ERPAVPREPVERKRLRRDAE) show a composition bias toward basic and acidic residues. The tract at residues 422–584 (PPKMSPVVEP…LHVTYKKVTP (163 aa)) is nitrobindin. Positions 451 and 574 each coordinate heme b.

This sequence in the C-terminal section; belongs to the nitrobindin family. As to quaternary structure, homodimer. Heme b serves as cofactor.

The protein resides in the cytoplasm. It is found in the nucleus. It catalyses the reaction peroxynitrite = nitrate. The protein operates within nitrogen metabolism. In terms of biological role, heme-binding protein able to scavenge peroxynitrite and to protect free L-tyrosine against peroxynitrite-mediated nitration, by acting as a peroxynitrite isomerase that converts peroxynitrite to nitrate. Therefore, this protein likely plays a role in peroxynitrite sensing and in the detoxification of reactive nitrogen and oxygen species (RNS and ROS, respectively). Is able to bind nitric oxide (NO) in vitro, but may act as a sensor of peroxynitrite levels in vivo, possibly modulating the transcriptional activity residing in the N-terminal region. The sequence is that of Peroxynitrite isomerase THAP4 from Bos taurus (Bovine).